Consider the following 283-residue polypeptide: Bifunctional protein FolD (283 aa).

NADP(+)-binding positions include 164–166 (GRS), Ser-189, and Thr-230.

It belongs to the tetrahydrofolate dehydrogenase/cyclohydrolase family. In terms of assembly, homodimer.

The catalysed reaction is (6R)-5,10-methylene-5,6,7,8-tetrahydrofolate + NADP(+) = (6R)-5,10-methenyltetrahydrofolate + NADPH. The enzyme catalyses (6R)-5,10-methenyltetrahydrofolate + H2O = (6R)-10-formyltetrahydrofolate + H(+). It functions in the pathway one-carbon metabolism; tetrahydrofolate interconversion. In terms of biological role, catalyzes the oxidation of 5,10-methylenetetrahydrofolate to 5,10-methenyltetrahydrofolate and then the hydrolysis of 5,10-methenyltetrahydrofolate to 10-formyltetrahydrofolate. This Dictyoglomus thermophilum (strain ATCC 35947 / DSM 3960 / H-6-12) protein is Bifunctional protein FolD.